We begin with the raw amino-acid sequence, 124 residues long: Ribonuclease pancreatic (124 aa).

Positions 7 and 10 each coordinate substrate. The Proton acceptor role is filled by His-12. 4 cysteine pairs are disulfide-bonded: Cys-26-Cys-84, Cys-40-Cys-95, Cys-58-Cys-110, and Cys-65-Cys-72. A glycan (N-linked (GlcNAc...) asparagine) is linked at Asn-34. Residues Lys-41–Thr-45, Lys-66, and Arg-85 contribute to the substrate site. The active-site Proton donor is His-119.

The protein belongs to the pancreatic ribonuclease family. In terms of assembly, monomer. Interacts with and forms tight 1:1 complexes with RNH1. Dimerization of two such complexes may occur. Interaction with RNH1 inhibits this protein. Pancreas.

Its subcellular location is the secreted. The catalysed reaction is an [RNA] containing cytidine + H2O = an [RNA]-3'-cytidine-3'-phosphate + a 5'-hydroxy-ribonucleotide-3'-[RNA].. It catalyses the reaction an [RNA] containing uridine + H2O = an [RNA]-3'-uridine-3'-phosphate + a 5'-hydroxy-ribonucleotide-3'-[RNA].. In terms of biological role, endonuclease that catalyzes the cleavage of RNA on the 3' side of pyrimidine nucleotides. Acts on single-stranded and double-stranded RNA. In Mesocricetus auratus (Golden hamster), this protein is Ribonuclease pancreatic (RNASE1).